The primary structure comprises 292 residues: Probable porphobilinogen deaminase (292 aa).

Cysteine 233 carries the post-translational modification S-(dipyrrolylmethanemethyl)cysteine.

It belongs to the HMBS family. Requires dipyrromethane as cofactor.

It carries out the reaction 4 porphobilinogen + H2O = hydroxymethylbilane + 4 NH4(+). Its pathway is porphyrin-containing compound metabolism; protoporphyrin-IX biosynthesis; coproporphyrinogen-III from 5-aminolevulinate: step 2/4. Tetrapolymerization of the monopyrrole PBG into the hydroxymethylbilane pre-uroporphyrinogen in several discrete steps. The sequence is that of Probable porphobilinogen deaminase (hemC) from Methanocaldococcus jannaschii (strain ATCC 43067 / DSM 2661 / JAL-1 / JCM 10045 / NBRC 100440) (Methanococcus jannaschii).